The chain runs to 316 residues: Transaldolase 2 (316 aa).

The active-site Schiff-base intermediate with substrate is the Lys-131.

It belongs to the transaldolase family. Type 1 subfamily. In terms of assembly, homodimer.

The protein resides in the cytoplasm. The catalysed reaction is D-sedoheptulose 7-phosphate + D-glyceraldehyde 3-phosphate = D-erythrose 4-phosphate + beta-D-fructose 6-phosphate. The protein operates within carbohydrate degradation; pentose phosphate pathway; D-glyceraldehyde 3-phosphate and beta-D-fructose 6-phosphate from D-ribose 5-phosphate and D-xylulose 5-phosphate (non-oxidative stage): step 2/3. Its function is as follows. Transaldolase is important for the balance of metabolites in the pentose-phosphate pathway. The polypeptide is Transaldolase 2 (Salmonella choleraesuis (strain SC-B67)).